Reading from the N-terminus, the 129-residue chain is Aldose 1-epimerase (129 aa).

Belongs to the aldose epimerase family.

The enzyme catalyses alpha-D-glucose = beta-D-glucose. It functions in the pathway carbohydrate metabolism; hexose metabolism. In terms of biological role, mutarotase converts alpha-aldose to the beta-anomer. It is active on D-glucose, L-arabinose, D-xylose, D-galactose, maltose and lactose. The polypeptide is Aldose 1-epimerase (galM) (Lactobacillus helveticus (Lactobacillus suntoryeus)).